The sequence spans 1179 residues: DNA-directed RNA polymerase subunit beta (1179 aa).

Acidic residues predominate over residues 1153–1162 (MREMEDEDEG). Residues 1153 to 1179 (MREMEDEDEGNGEKLNLVLEGGSLNEE) are disordered.

It belongs to the RNA polymerase beta chain family. The RNAP catalytic core consists of 2 alpha, 1 beta, 1 beta' and 1 omega subunit. When a sigma factor is associated with the core the holoenzyme is formed, which can initiate transcription.

It catalyses the reaction RNA(n) + a ribonucleoside 5'-triphosphate = RNA(n+1) + diphosphate. Functionally, DNA-dependent RNA polymerase catalyzes the transcription of DNA into RNA using the four ribonucleoside triphosphates as substrates. The protein is DNA-directed RNA polymerase subunit beta of Brevibacillus brevis (strain 47 / JCM 6285 / NBRC 100599).